The sequence spans 663 residues: Drug sensory protein A (663 aa).

The next 3 helical transmembrane spans lie at 32-52 (LMAA…FWAV), 165-185 (VFIP…GINP), and 199-219 (VTIA…VFNA). The 53-residue stretch at 220 to 272 (LTITQPIKELLLGVKNIAAGNFKQRITLPFGGELGELIVNFNEMAERLERYEA) folds into the HAMP domain. A PAS domain is found at 281–351 (EKAKLDTLVS…QPLRELAADQ (71 aa)). Residues 429 to 656 (NVSHELRTPL…TFWFDLAVYQ (228 aa)) form the Histidine kinase domain. His-432 carries the phosphohistidine; by autocatalysis modification.

The protein localises to the cell membrane. It carries out the reaction ATP + protein L-histidine = ADP + protein N-phospho-L-histidine.. The chain is Drug sensory protein A (dspA) from Synechocystis sp. (strain ATCC 27184 / PCC 6803 / Kazusa).